Reading from the N-terminus, the 120-residue chain is Phosphoribosyl-AMP cyclohydrolase (120 aa).

Residue aspartate 75 coordinates Mg(2+). Zn(2+) is bound at residue cysteine 76. The Mg(2+) site is built by aspartate 77 and aspartate 79. Residues cysteine 92 and cysteine 99 each contribute to the Zn(2+) site.

This sequence belongs to the PRA-CH family. As to quaternary structure, homodimer. Requires Mg(2+) as cofactor. Zn(2+) is required as a cofactor.

It localises to the cytoplasm. It catalyses the reaction 1-(5-phospho-beta-D-ribosyl)-5'-AMP + H2O = 1-(5-phospho-beta-D-ribosyl)-5-[(5-phospho-beta-D-ribosylamino)methylideneamino]imidazole-4-carboxamide. Its pathway is amino-acid biosynthesis; L-histidine biosynthesis; L-histidine from 5-phospho-alpha-D-ribose 1-diphosphate: step 3/9. Functionally, catalyzes the hydrolysis of the adenine ring of phosphoribosyl-AMP. This Methanosarcina acetivorans (strain ATCC 35395 / DSM 2834 / JCM 12185 / C2A) protein is Phosphoribosyl-AMP cyclohydrolase.